A 126-amino-acid chain; its full sequence is UPF0292 protein TSIB_0423 (126 aa).

The Toprim domain maps to 20-100 (NGVILVEGMR…RVDTNTRREL (81 aa)). The Mg(2+) site is built by E26, D69, and D71.

This sequence belongs to the UPF0292 family. Mg(2+) is required as a cofactor.

This Thermococcus sibiricus (strain DSM 12597 / MM 739) protein is UPF0292 protein TSIB_0423.